A 58-amino-acid chain; its full sequence is Small ribosomal subunit protein bS21 (58 aa).

Positions 34 to 58 (KREHYESPSVRRKKKSEAARRRKRR) are disordered. Basic residues predominate over residues 43–58 (VRRKKKSEAARRRKRR).

Belongs to the bacterial ribosomal protein bS21 family.

This chain is Small ribosomal subunit protein bS21, found in Caldicellulosiruptor bescii (strain ATCC BAA-1888 / DSM 6725 / KCTC 15123 / Z-1320) (Anaerocellum thermophilum).